Here is a 504-residue protein sequence, read N- to C-terminus: Beta-glucosidase 24 (504 aa).

Residues 1-18 (MELLWLLLLLLMASSTSS) form the signal peptide. Glutamine 47 provides a ligand contact to a beta-D-glucoside. N-linked (GlcNAc...) asparagine glycosylation occurs at asparagine 75. Residues histidine 151 and 196–197 (NE) contribute to the a beta-D-glucoside site. Glutamate 197 serves as the catalytic Proton donor. Cysteines 216 and 224 form a disulfide. N-linked (GlcNAc...) asparagine glycosylation is present at asparagine 329. Tyrosine 340 provides a ligand contact to a beta-D-glucoside. A glycan (N-linked (GlcNAc...) asparagine) is linked at asparagine 371. Residue glutamate 411 coordinates a beta-D-glucoside. The active-site Nucleophile is the glutamate 411. Asparagine 421 carries N-linked (GlcNAc...) asparagine glycosylation. Residues tryptophan 460, 467–468 (EW), and phenylalanine 476 each bind a beta-D-glucoside.

The protein belongs to the glycosyl hydrolase 1 family.

The catalysed reaction is Hydrolysis of terminal, non-reducing beta-D-glucosyl residues with release of beta-D-glucose.. The chain is Beta-glucosidase 24 (BGLU24) from Oryza sativa subsp. japonica (Rice).